Consider the following 166-residue polypeptide: uncharacterized protein (166 aa).

4Fe-4S ferredoxin-type domains follow at residues 44–73 (ARED…LKQQ), 75–104 (ATLE…PNFP), and 139–166 (STLE…ITLK). [4Fe-4S] cluster-binding residues include C53, C56, C59, C63, C84, C87, C90, and C94.

This is an uncharacterized protein from Haemophilus influenzae (strain ATCC 51907 / DSM 11121 / KW20 / Rd).